Here is a 731-residue protein sequence, read N- to C-terminus: Fatty acid oxidation complex subunit alpha (731 aa).

Residues 15-204 (TEKTSAFSLT…RQGLVDEAVP (190 aa)) are enoyl-CoA hydratase. A 3-hydroxyacyl-CoA dehydrogenase region spans residues 320 to 729 (KPIHRVGILG…FYPPADKDNS (410 aa)).

It in the N-terminal section; belongs to the enoyl-CoA hydratase/isomerase family. This sequence in the central section; belongs to the 3-hydroxyacyl-CoA dehydrogenase family. In terms of assembly, heterotetramer of two alpha chains (FadJ) and two beta chains (FadI).

The protein localises to the cytoplasm. It carries out the reaction a (3S)-3-hydroxyacyl-CoA = a (2E)-enoyl-CoA + H2O. The enzyme catalyses a 4-saturated-(3S)-3-hydroxyacyl-CoA = a (3E)-enoyl-CoA + H2O. It catalyses the reaction a (3S)-3-hydroxyacyl-CoA + NAD(+) = a 3-oxoacyl-CoA + NADH + H(+). The catalysed reaction is (3S)-3-hydroxybutanoyl-CoA = (3R)-3-hydroxybutanoyl-CoA. It functions in the pathway lipid metabolism; fatty acid beta-oxidation. Catalyzes the formation of a hydroxyacyl-CoA by addition of water on enoyl-CoA. Also exhibits 3-hydroxyacyl-CoA epimerase and 3-hydroxyacyl-CoA dehydrogenase activities. The chain is Fatty acid oxidation complex subunit alpha from Pectobacterium atrosepticum (strain SCRI 1043 / ATCC BAA-672) (Erwinia carotovora subsp. atroseptica).